The primary structure comprises 206 residues: Ribonuclease HII (206 aa).

The RNase H type-2 domain maps to Arg-22–Leu-206. Positions 28, 29, and 120 each coordinate a divalent metal cation.

Belongs to the RNase HII family. It depends on Mn(2+) as a cofactor. Requires Mg(2+) as cofactor.

It localises to the cytoplasm. It catalyses the reaction Endonucleolytic cleavage to 5'-phosphomonoester.. Its function is as follows. Endonuclease that specifically degrades the RNA of RNA-DNA hybrids. The chain is Ribonuclease HII from Caldicellulosiruptor bescii (strain ATCC BAA-1888 / DSM 6725 / KCTC 15123 / Z-1320) (Anaerocellum thermophilum).